An 871-amino-acid chain; its full sequence is Protein translocase subunit SecA (871 aa).

ATP-binding positions include glutamine 80, 98–102 (GEGKT), and aspartate 537. Residues 852 to 871 (MEKGKKKGGSHGLGKIRVKR) form a disordered region. The span at 855–871 (GKKKGGSHGLGKIRVKR) shows a compositional bias: basic residues.

The protein belongs to the SecA family. Monomer and homodimer. Part of the essential Sec protein translocation apparatus which comprises SecA, SecYEG and auxiliary proteins SecDF. Other proteins may also be involved.

The protein localises to the cell inner membrane. It is found in the cytoplasm. It carries out the reaction ATP + H2O + cellular proteinSide 1 = ADP + phosphate + cellular proteinSide 2.. Its function is as follows. Part of the Sec protein translocase complex. Interacts with the SecYEG preprotein conducting channel. Has a central role in coupling the hydrolysis of ATP to the transfer of proteins into and across the cell membrane, serving as an ATP-driven molecular motor driving the stepwise translocation of polypeptide chains across the membrane. The chain is Protein translocase subunit SecA from Thermotoga neapolitana (strain ATCC 49049 / DSM 4359 / NBRC 107923 / NS-E).